We begin with the raw amino-acid sequence, 91 residues long: Pre-early 3 receptor internalization and degradation alpha protein (91 aa).

Over 1–4 (MIPR) the chain is Cytoplasmic. A propeptide spans 1–22 (MIPRVLILLTLVALFCACSTLA) (signal peptide). The helical transmembrane segment at 5–25 (VLILLTLVALFCACSTLAAVA) threads the bilayer. At 26 to 34 (HIEVDCIPP) the chain is on the lumenal side. Residues 35–60 (FTVYLLYGFVTLILICSLVTVVIAFI) form a helical membrane-spanning segment. At 61-91 (QFIDWVCVRIAYLRHHPQYRDRTIADLLRIL) the chain is on the cytoplasmic side.

This sequence belongs to the adenoviridae E3-RID-alpha family. Homodimer with only one chain cleaved by signal peptidase. Interacts with E3 RID-beta and E3 CR1-alpha. The signal peptide is only cleaved partially by host signal peptidase. This results in two forms of the protein, one uncleaved with two transmembrane regions, and one cleaved with one transmembrane region.

Its subcellular location is the host membrane. It localises to the host endoplasmic reticulum. Functionally, prevents infected cell apoptosis induced by the host immune system. Acts by down-regulating a number of cell surface receptors in the tumor necrosis factor (TNF) receptor superfamily, namely FAS, TNFRSF10A/TRAIL receptor 1, and TNFRSF10B/TRAIL receptor 2. Down-regulation of these death receptors protects adenovirus-infected cells from apoptosis induced by the death receptor ligands Fas ligand and TRAIL. RID complex also down-regulates certain tyrosine kinase cell surface receptors, especially the epidermal growth factor receptor (EGFR). RID-mediated Fas and EGFR down-regulation occurs via endocytosis of the receptors into endosomes followed by transport to and degradation within lysosomes. The chain is Pre-early 3 receptor internalization and degradation alpha protein from Homo sapiens (Human).